A 239-amino-acid polypeptide reads, in one-letter code: Sugar fermentation stimulation protein homolog (239 aa).

This sequence belongs to the SfsA family.

In Mannheimia succiniciproducens (strain KCTC 0769BP / MBEL55E), this protein is Sugar fermentation stimulation protein homolog.